A 334-amino-acid polypeptide reads, in one-letter code: uncharacterized protein (334 aa).

Serine 126 is a binding site for substrate. Tyrosine 151 serves as the catalytic Proton acceptor.

Belongs to the NAD(P)-dependent epimerase/dehydratase family. dTDP-glucose dehydratase subfamily.

This is an uncharacterized protein from Escherichia coli O111:H-.